A 175-amino-acid polypeptide reads, in one-letter code: Ribosome maturation factor RimM (175 aa).

Residues 96–175 (EDEFYWRELF…RIEVDWDPGF (80 aa)) form the PRC barrel domain.

Belongs to the RimM family. As to quaternary structure, binds ribosomal protein uS19.

The protein resides in the cytoplasm. Its function is as follows. An accessory protein needed during the final step in the assembly of 30S ribosomal subunit, possibly for assembly of the head region. Essential for efficient processing of 16S rRNA. May be needed both before and after RbfA during the maturation of 16S rRNA. It has affinity for free ribosomal 30S subunits but not for 70S ribosomes. The protein is Ribosome maturation factor RimM of Aliivibrio fischeri (strain ATCC 700601 / ES114) (Vibrio fischeri).